The sequence spans 384 residues: tRNA(Met) cytidine acetate ligase (384 aa).

ATP is bound by residues 7 to 20 (VAEYNPFHSGHEFL), Gly-101, Asn-153, and Arg-178.

It belongs to the TmcAL family.

The protein resides in the cytoplasm. It catalyses the reaction cytidine(34) in elongator tRNA(Met) + acetate + ATP = N(4)-acetylcytidine(34) in elongator tRNA(Met) + AMP + diphosphate. Functionally, catalyzes the formation of N(4)-acetylcytidine (ac(4)C) at the wobble position of elongator tRNA(Met), using acetate and ATP as substrates. First activates an acetate ion to form acetyladenylate (Ac-AMP) and then transfers the acetyl group to tRNA to form ac(4)C34. The sequence is that of tRNA(Met) cytidine acetate ligase from Lactobacillus delbrueckii subsp. bulgaricus (strain ATCC 11842 / DSM 20081 / BCRC 10696 / JCM 1002 / NBRC 13953 / NCIMB 11778 / NCTC 12712 / WDCM 00102 / Lb 14).